The primary structure comprises 159 residues: Phosphopantetheine adenylyltransferase (159 aa).

Residue threonine 10 participates in substrate binding. ATP contacts are provided by residues 10–11 (TF) and histidine 18. Substrate contacts are provided by lysine 42, methionine 74, and arginine 88. ATP is bound by residues 89-91 (GLR), glutamate 99, and 124-130 (WSFISSS).

It belongs to the bacterial CoaD family. As to quaternary structure, homohexamer. It depends on Mg(2+) as a cofactor.

The protein resides in the cytoplasm. It catalyses the reaction (R)-4'-phosphopantetheine + ATP + H(+) = 3'-dephospho-CoA + diphosphate. The protein operates within cofactor biosynthesis; coenzyme A biosynthesis; CoA from (R)-pantothenate: step 4/5. Functionally, reversibly transfers an adenylyl group from ATP to 4'-phosphopantetheine, yielding dephospho-CoA (dPCoA) and pyrophosphate. The sequence is that of Phosphopantetheine adenylyltransferase from Yersinia enterocolitica serotype O:8 / biotype 1B (strain NCTC 13174 / 8081).